Reading from the N-terminus, the 111-residue chain is Ciprofloxacin tolerance protein (111 aa).

Topologically, residues 1–5 (MVTAN) are periplasmic. A helical membrane pass occupies residues 6–26 (FAAIAGLSLIAVALVAVFFSP). Residues 27 to 30 (YRRW) are Cytoplasmic-facing. Residues 31–51 (LGFMLAGMFFWGLLEVVRFGV) traverse the membrane as a helical segment. Residues 52-58 (QVTFEMP) are Periplasmic-facing. A helical transmembrane segment spans residues 59–79 (VTYSYLTALSLAMVMVTFVLL). At 80–111 (REDKQAQKALANRQYIEHTPVYEDDQQQCSSR) the chain is on the cytoplasmic side.

Its subcellular location is the cell inner membrane. In terms of biological role, may play a role in cellular filamentation, especially in response to ciprofloxacin. Increased expression confers tolerance to the antibiotic ciprofloxacin. This Acinetobacter baumannii protein is Ciprofloxacin tolerance protein.